Consider the following 664-residue polypeptide: Macoilin (664 aa).

Helical transmembrane passes span 28 to 48 (TFLYLKFLVVWALVLLADFVL), 75 to 95 (AFSVFFVCVAFTSNIICLLFI), 120 to 140 (VCLPTVSLWILFVYIEAAIRF), and 154 to 174 (FAAHCIGYPVVTLGFGFKSYV). A compositionally biased stretch (basic and acidic residues) spans 253–265 (REKGKEKDKDAKK). A disordered region spans residues 253 to 274 (REKGKEKDKDAKKHNLGINNNN). Serine 305 bears the Phosphoserine mark. Residues 320 to 348 (KNYKNASGVVNSSPRSHSATNGSIPSSSS) show a composition bias toward polar residues. Residues 320 to 367 (KNYKNASGVVNSSPRSHSATNGSIPSSSSKNEKKQKCTSKSPSAHKDL) are disordered. A glycan (N-linked (GlcNAc...) asparagine) is linked at asparagine 324. Serine 332 carries the post-translational modification Phosphoserine. 2 N-linked (GlcNAc...) asparagine glycosylation sites follow: asparagine 340 and asparagine 452. 2 positions are modified to phosphoserine: serine 631 and serine 634. The segment at 631-664 (SPLSPVSPHYSSKFVETSPSGLDPNASVYQPLKK) is disordered. The N-linked (GlcNAc...) asparagine glycan is linked to asparagine 655.

It belongs to the macoilin family.

Its subcellular location is the rough endoplasmic reticulum membrane. The protein resides in the nucleus membrane. Plays a role in the regulation of neuronal activity. The protein is Macoilin (MACO1) of Bos taurus (Bovine).